The following is a 554-amino-acid chain: Zinc finger protein 426 (554 aa).

One can recognise a KRAB domain in the interval 42-112 (VTFDDVAVDF…QGGVLQGWEM (71 aa)). The C2H2-type 1; atypical zinc finger occupies 146–174 (CDCEQCGEVFSEHSCLKTHVRTQSTGNTH). 11 C2H2-type zinc fingers span residues 224 to 246 (FECS…MRTH), 280 to 302 (YKCK…MRTH), 308 to 330 (YECK…GRTH), 336 to 358 (YVCK…VRSH), 364 to 386 (YECK…IRTH), 392 to 414 (FVCV…LRTH), 420 to 442 (CECK…MRTH), 448 to 470 (YTCK…MRIH), 476 to 498 (YECK…ERTH), 504 to 526 (YECK…EKTH), and 532 to 554 (YKCQ…EQIH).

Its subcellular location is the nucleus. In terms of biological role, may be involved in transcriptional regulation. The polypeptide is Zinc finger protein 426 (ZNF426) (Homo sapiens (Human)).